The sequence spans 384 residues: Thylakoid membrane protein TERC, chloroplastic (384 aa).

The transit peptide at 1-48 (MSLASVIHHGILPPAKSDRIFLTIPVFPPDFRARGWTKSPFSLLINPS) directs the protein to the chloroplast. The Stromal segment spans residues 49–115 (LASAANRRLS…DYQQEETYKT (67 aa)). The tract at residues 68-104 (GIDQEDEEKESRELLPHKNDENATTSRSSSSVDSGGL) is disordered. A compositionally biased stretch (basic and acidic residues) spans 76-88 (KESRELLPHKNDE). A helical membrane pass occupies residues 116–136 (SFKTVALCVGTAVAFGIGIGL). Residues 137 to 145 (KEGVGKASE) are Lumenal, thylakoid-facing. Residues 146–166 (FFAGYILEQSLSVDNLFVFVL) form a helical membrane-spanning segment. Residues 167–180 (VFKYFKVPLMYQNK) are Stromal-facing. The helical transmembrane segment at 181 to 201 (VLTYGIAGAIVFRFTLILLGT) threads the bilayer. The Lumenal, thylakoid portion of the chain corresponds to 202-206 (ATLQK). The helical transmembrane segment at 207 to 227 (FEAVNLLLAAVLLYSSFKLFA) threads the bilayer. At 228 to 275 (SEEDDTDLSDNFIVKTCQRFIPVTSSYDGNRFFTKHDGILKATPLLLT) the chain is on the stromal side. The chain crosses the membrane as a helical span at residues 276-296 (VAVIELSDIAFAVDSIPAVFG). The Lumenal, thylakoid portion of the chain corresponds to 297–301 (VTRDP). The chain crosses the membrane as a helical span at residues 302–322 (FIVLTSNLFAILGLRSLYTLI). Over 323–335 (SEGMDELEYLQPS) the chain is Stromal. Residues 336–356 (IAVVLGFIGVKMILDFFGFHI) traverse the membrane as a helical segment. A topological domain (lumenal, thylakoid) is located at residue Ser357. Residues 358-378 (TEASLGVVALSLSTGVLLSLT) traverse the membrane as a helical segment. The Stromal portion of the chain corresponds to 379–384 (NKSSDS).

In terms of assembly, interacts with ALB3. Expressed in roots, rosette and cauline leaves, stems and flowers.

It is found in the plastid. The protein resides in the chloroplast thylakoid membrane. Its function is as follows. Integral thylakoid membrane protein that plays a crucial role in thylakoid membrane biogenesis and thylakoid formation in early chloroplast development. Is essential for de novo synthesis of photosystem II (PSII) core proteins and required for efficient insertion of thylakoid membrane proteins, presumably via interaction with ALB3. May assist synthesis of thylakoid membrane proteins at the membrane insertion step. This is Thylakoid membrane protein TERC, chloroplastic from Arabidopsis thaliana (Mouse-ear cress).